Consider the following 540-residue polypeptide: Aquaporin-5 (540 aa).

The interval 1–224 is disordered; sequence MSGEGTDLPT…ESIDGYNYES (224 aa). Residues 1–263 are Cytoplasmic-facing; sequence MSGEGTDLPT…QWMNSNFKNH (263 aa). Positions 25–44 are enriched in polar residues; sequence PGSSQQQLVPIAHTISSPSK. Composition is skewed to basic and acidic residues over residues 119–133, 140–155, 174–194, and 204–214; these read RAREDLYYSDREREN, RARDDHPHPDYHERSR, YFDDSSRSDLGKDRDLEKGMR, and SGEKVRRKSTD. Residues 264–284 traverse the membrane as a helical segment; it reads FVATIGEFVGTTMFLFFAFAG. Over 285–308 the chain is Extracellular; sequence TQVANIDSNTVNTTTGAATGFNIA. Asn296 is a glycosylation site (N-linked (GlcNAc...) asparagine). The chain crosses the membrane as a helical span at residues 309-329; that stretch reads VQLYIAVIFGFSLMVNVWIFF. The Cytoplasmic portion of the chain corresponds to 330 to 332; sequence RIS. The helical transmembrane segment at 333-353 threads the bilayer; the sequence is GGLFNPAVTLGMVLVGAIPIP. Residues 354–356 lie on the Extracellular side of the membrane; the sequence is RAA. Residues 357-377 traverse the membrane as a helical segment; that stretch reads CLFFAQILGGIAASGMVLGLF. Residues 378-393 are Cytoplasmic-facing; sequence PTTFNVRTTLGASTST. Residues 394–414 form a helical membrane-spanning segment; it reads VQGVFIEAILTAELVFTIFML. Over 415–420 the chain is Extracellular; it reads AKEKHK. The helical transmembrane segment at 421 to 441 threads the bilayer; it reads ATFIAPVGIGLALFIAEMVGV. Residues 442-467 lie on the Cytoplasmic side of the membrane; the sequence is YYTGGSLNPARSFGPCVVSGSFDKEH. The chain crosses the membrane as a helical span at residues 468 to 488; that stretch reads WIYWIGPITGTFIAVFFYKFI. The Extracellular segment spans residues 489-540; it reads KMLEYEMANPGQDGDAKNDPTQNEKKREQILEERNRRYEKRNGSLRPGSRLS. The segment at 499 to 540 is disordered; sequence GQDGDAKNDPTQNEKKREQILEERNRRYEKRNGSLRPGSRLS. Positions 502 to 530 are enriched in basic and acidic residues; the sequence is GDAKNDPTQNEKKREQILEERNRRYEKRN. The N-linked (GlcNAc...) asparagine glycan is linked to Asn530.

It belongs to the MIP/aquaporin (TC 1.A.8) family.

Its subcellular location is the membrane. The enzyme catalyses H2O(in) = H2O(out). Water channel required to facilitate the transport of water across membranes. May play a role in the vegetative growth. In Botryotinia fuckeliana (strain B05.10) (Noble rot fungus), this protein is Aquaporin-5.